Reading from the N-terminus, the 141-residue chain is Nucleoside diphosphate kinase (141 aa).

ATP-binding residues include Lys-11, Phe-59, Arg-87, Thr-93, Arg-104, and Asn-114. Residue His-117 is the Pros-phosphohistidine intermediate of the active site.

This sequence belongs to the NDK family. Homotetramer. Mg(2+) serves as cofactor.

The protein localises to the cytoplasm. The enzyme catalyses a 2'-deoxyribonucleoside 5'-diphosphate + ATP = a 2'-deoxyribonucleoside 5'-triphosphate + ADP. It catalyses the reaction a ribonucleoside 5'-diphosphate + ATP = a ribonucleoside 5'-triphosphate + ADP. Functionally, major role in the synthesis of nucleoside triphosphates other than ATP. The ATP gamma phosphate is transferred to the NDP beta phosphate via a ping-pong mechanism, using a phosphorylated active-site intermediate. This chain is Nucleoside diphosphate kinase, found in Burkholderia cenocepacia (strain HI2424).